The primary structure comprises 456 residues: Bifunctional protein GlmU (456 aa).

The segment at 1 to 228 (MPQNTLNIVI…SHLAAGVNNK (228 aa)) is pyrophosphorylase. UDP-N-acetyl-alpha-D-glucosamine-binding positions include 11 to 14 (LAAG), Lys-25, Gln-75, 80 to 81 (GT), 102 to 104 (YGD), Gly-138, Glu-153, Asn-168, and Asn-226. Residue Asp-104 participates in Mg(2+) binding. Residue Asn-226 coordinates Mg(2+). The tract at residues 229 to 249 (LQLAELERIFQTEQAQELLKA) is linker. An N-acetyltransferase region spans residues 250-456 (GVTLRDPARF…GWVRPEKNKQ (207 aa)). Arg-332 and Lys-350 together coordinate UDP-N-acetyl-alpha-D-glucosamine. His-362 acts as the Proton acceptor in catalysis. Tyr-365 and Asn-376 together coordinate UDP-N-acetyl-alpha-D-glucosamine. Residues Ala-379, 385-386 (NY), Ser-404, Ala-422, and Arg-439 contribute to the acetyl-CoA site.

This sequence in the N-terminal section; belongs to the N-acetylglucosamine-1-phosphate uridyltransferase family. In the C-terminal section; belongs to the transferase hexapeptide repeat family. In terms of assembly, homotrimer. The cofactor is Mg(2+).

The protein localises to the cytoplasm. The enzyme catalyses alpha-D-glucosamine 1-phosphate + acetyl-CoA = N-acetyl-alpha-D-glucosamine 1-phosphate + CoA + H(+). It carries out the reaction N-acetyl-alpha-D-glucosamine 1-phosphate + UTP + H(+) = UDP-N-acetyl-alpha-D-glucosamine + diphosphate. Its pathway is nucleotide-sugar biosynthesis; UDP-N-acetyl-alpha-D-glucosamine biosynthesis; N-acetyl-alpha-D-glucosamine 1-phosphate from alpha-D-glucosamine 6-phosphate (route II): step 2/2. It participates in nucleotide-sugar biosynthesis; UDP-N-acetyl-alpha-D-glucosamine biosynthesis; UDP-N-acetyl-alpha-D-glucosamine from N-acetyl-alpha-D-glucosamine 1-phosphate: step 1/1. The protein operates within bacterial outer membrane biogenesis; LPS lipid A biosynthesis. Its function is as follows. Catalyzes the last two sequential reactions in the de novo biosynthetic pathway for UDP-N-acetylglucosamine (UDP-GlcNAc). The C-terminal domain catalyzes the transfer of acetyl group from acetyl coenzyme A to glucosamine-1-phosphate (GlcN-1-P) to produce N-acetylglucosamine-1-phosphate (GlcNAc-1-P), which is converted into UDP-GlcNAc by the transfer of uridine 5-monophosphate (from uridine 5-triphosphate), a reaction catalyzed by the N-terminal domain. The sequence is that of Bifunctional protein GlmU from Neisseria meningitidis serogroup A / serotype 4A (strain DSM 15465 / Z2491).